The primary structure comprises 231 residues: MMEVFMNFLDQLDLIIQNKHMLEHTFYVKWSKGELTKEQLQAYAKDYYLHIKAFPKYLSAIHSRCDDLEARKLLLDNLMDEENGYPNHIDLWKQFVFALGVTPEELEAHEPSEAAKAKVATFMRWCTGDSLAAGVAALYSYESQIPRIAREKIRGLTEYFGFSNPEDYAYFTEHEEADVRHAREEKALIEMLLKDDADKVLEASQEVTQSLYGFLDSFLDPGTCCSCHQSY.

The Fe(2+) site is built by E81, H88, E142, H174, D178, and H181.

Belongs to the CADD family. In terms of assembly, homodimer. During infection, interacts with death domains of mammalian tumor necrosis factor (TNF) family receptors Fas, DR4, DR5 and to some extent TNFR1, but not with the respective downstream adapters. The cofactor is Fe(2+). It depends on Mn(2+) as a cofactor.

The protein resides in the secreted. Its subcellular location is the host cytoplasm. The protein is a cosubstrate rather than a true enzyme and is left in an inactive state after a single turnover. Inactive under anaerobic conditions. Functionally, involved in de novo para-aminobenzoate (PABA) biosynthesis. Acts as a self-sacrificing or 'suicide' enzyme that utilizes its own active site tyrosine residue(s) as the substrate for PABA synthesis. The side chain of the tyrosine residue is released from the protein backbone via cleavage of the C(alpha)-C(beta) bond, leaving a glycine in place of the original tyrosine residue. Reaction requires O(2) and a reduced dimetal cofactor. Its function is as follows. Was also identified as a specific toxin that associates with death domains of tumor necrosis factor family (TNF) receptors and induces apoptosis in mammalian cell lines through a Caspase-dependent mechanism. In Chlamydia trachomatis serovar D (strain ATCC VR-885 / DSM 19411 / UW-3/Cx), this protein is 4-aminobenzoate synthase.